The sequence spans 288 residues: ATP synthase gamma chain (288 aa).

The protein belongs to the ATPase gamma chain family. In terms of assembly, F-type ATPases have 2 components, CF(1) - the catalytic core - and CF(0) - the membrane proton channel. CF(1) has five subunits: alpha(3), beta(3), gamma(1), delta(1), epsilon(1). CF(0) has three main subunits: a, b and c.

The protein localises to the cell inner membrane. Produces ATP from ADP in the presence of a proton gradient across the membrane. The gamma chain is believed to be important in regulating ATPase activity and the flow of protons through the CF(0) complex. This Vibrio cholerae serotype O1 (strain ATCC 39541 / Classical Ogawa 395 / O395) protein is ATP synthase gamma chain.